The following is a 269-amino-acid chain: UPF0162 protein BUsg_167 (269 aa).

It belongs to the UPF0162 family.

In Buchnera aphidicola subsp. Schizaphis graminum (strain Sg), this protein is UPF0162 protein BUsg_167.